The chain runs to 201 residues: UPF0056 membrane protein PYRAB13050 (201 aa).

Helical transmembrane passes span 8 to 28 (FAVL…VPIF), 49 to 69 (ITVL…FKFF), 73 to 93 (VDAF…EMLS), 111 to 131 (VAVI…TTVM), 140 to 160 (PIVI…LASG), and 181 to 201 (LILT…AFGI).

Belongs to the UPF0056 (MarC) family.

It is found in the cell membrane. This Pyrococcus abyssi (strain GE5 / Orsay) protein is UPF0056 membrane protein PYRAB13050.